A 157-amino-acid chain; its full sequence is Phosphopantetheine adenylyltransferase (157 aa).

S8 contacts substrate. Residues 8-9 and H16 contribute to the ATP site; that span reads SF. The substrate site is built by K40, T72, and R86. ATP-binding positions include 87–89, E97, and 122–128; these read GLR and HSFLSSS.

The protein belongs to the bacterial CoaD family. In terms of assembly, homohexamer. Mg(2+) is required as a cofactor.

Its subcellular location is the cytoplasm. The catalysed reaction is (R)-4'-phosphopantetheine + ATP + H(+) = 3'-dephospho-CoA + diphosphate. It functions in the pathway cofactor biosynthesis; coenzyme A biosynthesis; CoA from (R)-pantothenate: step 4/5. In terms of biological role, reversibly transfers an adenylyl group from ATP to 4'-phosphopantetheine, yielding dephospho-CoA (dPCoA) and pyrophosphate. The chain is Phosphopantetheine adenylyltransferase from Prochlorococcus marinus (strain MIT 9303).